Consider the following 663-residue polypeptide: Subtilisin-like serine protease (663 aa).

The N-terminal stretch at 1 to 23 (MKKFGAVVLALFLVGLMAGSVLA) is a signal peptide. A propeptide spans 24–136 (APQKPAVRNV…IQEDYVVKVA (113 aa)) (removed in mature form). One can recognise a Peptidase S8 domain in the interval 139–439 (TEGLDESAAQ…AGRVNAYKAA (301 aa)). Catalysis depends on charge relay system residues D170, H203, and S382. Positions 420, 423, 483, 484, 485, 497, 498, 501, and 507 each coordinate Ca(2+). The interval 537 to 565 (VSDGSLGQPSGGGSEPSPSPSPEPTVDEK) is disordered. A propeptide spans 563–663 (DEKTFTGTVH…YQLDAKVYYG (101 aa)) (removed in mature form).

The protein belongs to the peptidase S8 family. As to quaternary structure, monomer.

It catalyses the reaction Hydrolysis of proteins with broad specificity for peptide bonds, and a preference for a large uncharged residue in P1. Hydrolyzes peptide amides.. With respect to regulation, resistant to treatment with 5% SDS, 8 M urea, 10% Triton X-100 or 10% Tween-20. Fully active although less stable in the presence of 10 mM EDTA. Activity not affected by the absence or presence of 10 mM CaCl(2). Unstable in the presence of 2 M or over GdnHCl and loses 35% and 99% of its activity upon incubation with 2 and 4 M GdnHCl, respectively, for 1 hour at 55 degrees Celsius. Nearly fully loses activity upon incubation at pH 2.0. Serine protease with a broad substrate specificity. This is Subtilisin-like serine protease from Thermococcus kodakarensis (strain ATCC BAA-918 / JCM 12380 / KOD1) (Pyrococcus kodakaraensis (strain KOD1)).